We begin with the raw amino-acid sequence, 105 residues long: Phosphoribosyl-ATP pyrophosphatase (105 aa).

The protein belongs to the PRA-PH family.

The protein resides in the cytoplasm. The catalysed reaction is 1-(5-phospho-beta-D-ribosyl)-ATP + H2O = 1-(5-phospho-beta-D-ribosyl)-5'-AMP + diphosphate + H(+). Its pathway is amino-acid biosynthesis; L-histidine biosynthesis; L-histidine from 5-phospho-alpha-D-ribose 1-diphosphate: step 2/9. The chain is Phosphoribosyl-ATP pyrophosphatase from Roseobacter denitrificans (strain ATCC 33942 / OCh 114) (Erythrobacter sp. (strain OCh 114)).